A 110-amino-acid polypeptide reads, in one-letter code: Prothymosin alpha (110 aa).

Residue Met1 is modified to N-acetylmethionine. Residues 1–110 (MSDAAVDTSS…TKKQKTDEDD (110 aa)) form a disordered region. Ser2 carries the post-translational modification N-acetylserine; in Prothymosin alpha, N-terminally processed. Ser2 carries the post-translational modification Phosphoserine. A Phosphothreonine; by CK2 modification is found at Thr8. 2 positions are modified to phosphoserine: Ser9 and Ser10. Phosphothreonine; by CK2 is present on residues Thr13 and Thr14. Over residues 13-31 (TTKDLKEKKEVVEEAENGR) the composition is skewed to basic and acidic residues. The residue at position 15 (Lys15) is an N6-acetyllysine; alternate. N6-succinyllysine; alternate is present on Lys15. Positions 32 to 41 (EAPANGNANE) are enriched in low complexity. Acidic residues predominate over residues 42–83 (ENGEQEADNEVDEEEEEGGEEEEEEEEGDGEEEDGDEDEEAE). Residues 100 to 110 (DTKKQKTDEDD) are compositionally biased toward basic and acidic residues. Thr101 is subject to Phosphothreonine. Residue Lys102 is modified to N6-acetyllysine; alternate. A Glycyl lysine isopeptide (Lys-Gly) (interchain with G-Cter in SUMO2); alternate cross-link involves residue Lys102. Thr106 bears the Phosphothreonine mark.

Belongs to the pro/parathymosin family. In terms of assembly, interacts with NUPR1; regulates apoptotic process. Covalently linked to a small RNA of about 20 nucleotides.

It localises to the nucleus. In terms of biological role, prothymosin alpha may mediate immune function by conferring resistance to certain opportunistic infections. This is Prothymosin alpha (PTMA) from Bos taurus (Bovine).